Reading from the N-terminus, the 718-residue chain is Polyribonucleotide nucleotidyltransferase (718 aa).

Mg(2+) contacts are provided by Asp491 and Asp497. The 60-residue stretch at 558–617 (PRMLTIKINPEKIRDVIGKGGATIRALTEETGTQIDISDDGTIVIASVDEGQAKEAQRRI) folds into the KH domain. Residues 627–695 (GQVYDGSVLR…EKGRLRLSVK (69 aa)) form the S1 motif domain.

Belongs to the polyribonucleotide nucleotidyltransferase family. The cofactor is Mg(2+).

The protein resides in the cytoplasm. The enzyme catalyses RNA(n+1) + phosphate = RNA(n) + a ribonucleoside 5'-diphosphate. Involved in mRNA degradation. Catalyzes the phosphorolysis of single-stranded polyribonucleotides processively in the 3'- to 5'-direction. The protein is Polyribonucleotide nucleotidyltransferase of Bordetella avium (strain 197N).